Reading from the N-terminus, the 231-residue chain is UPF0758 protein pc1765 (231 aa).

The MPN domain occupies 107–229; that stretch reads LIEHSSHAYQ…YVSFKDQNLL (123 aa). His178, His180, and Asp191 together coordinate Zn(2+). The short motif at 178-191 is the JAMM motif element; the sequence is HNHPSGDPMPSNQD.

It belongs to the UPF0758 family.

The polypeptide is UPF0758 protein pc1765 (Protochlamydia amoebophila (strain UWE25)).